Here is a 373-residue protein sequence, read N- to C-terminus: Glutamate 5-kinase (373 aa).

K16 is a binding site for ATP. Substrate contacts are provided by S56, D143, and N155. Residue 175–176 (TD) participates in ATP binding. Residues 281–359 (RGVVTLDDGA…TKIETLLGYK (79 aa)) form the PUA domain.

This sequence belongs to the glutamate 5-kinase family.

Its subcellular location is the cytoplasm. The catalysed reaction is L-glutamate + ATP = L-glutamyl 5-phosphate + ADP. The protein operates within amino-acid biosynthesis; L-proline biosynthesis; L-glutamate 5-semialdehyde from L-glutamate: step 1/2. Its function is as follows. Catalyzes the transfer of a phosphate group to glutamate to form L-glutamate 5-phosphate. The polypeptide is Glutamate 5-kinase (Teredinibacter turnerae (strain ATCC 39867 / T7901)).